Consider the following 902-residue polypeptide: Aconitate hydratase A (902 aa).

Cys-441, Cys-507, and Cys-510 together coordinate [4Fe-4S] cluster.

It belongs to the aconitase/IPM isomerase family. In terms of assembly, monomer. [4Fe-4S] cluster serves as cofactor.

The catalysed reaction is citrate = D-threo-isocitrate. The enzyme catalyses (2S,3R)-3-hydroxybutane-1,2,3-tricarboxylate = 2-methyl-cis-aconitate + H2O. It functions in the pathway carbohydrate metabolism; tricarboxylic acid cycle; isocitrate from oxaloacetate: step 2/2. Its pathway is organic acid metabolism; propanoate degradation. Its function is as follows. Involved in the catabolism of short chain fatty acids (SCFA) via the tricarboxylic acid (TCA)(acetyl degradation route) and probably the 2-methylcitrate cycle I (propionate degradation route). Catalyzes the reversible isomerization of citrate to isocitrate via cis-aconitate. Also able to catalyze the hydration of cis-homoaconitate to yield (R)-homocitrate, but with a lower efficiency. Could catalyze the hydration of 2-methyl-cis-aconitate to yield (2R,3S)-2-methylisocitrate. The apo form of AcnA functions as a RNA-binding regulatory protein. This Thermus thermophilus (strain ATCC 27634 / DSM 579 / HB8) protein is Aconitate hydratase A (acoA).